The sequence spans 945 residues: Kinesin-like protein KIN-UA (945 aa).

The disordered stretch occupies residues 1–54 (MAANGRASVRPVERHGAPPRPAGRSRSVAPPSRRPSPSPSRARPAAADNDGGSD). Residues 22–31 (AGRSRSVAPP) are compositionally biased toward low complexity. Residues 57-399 (RVRVAVRLRP…IMFGQRAMKI (343 aa)) enclose the Kinesin motor domain. 142–149 (GQTGTGKT) contributes to the ATP binding site. The D-BOX motif lies at 369-377 (RTSLIVTIG). The stretch at 415-644 (YKKVEHEVDH…ILRLKQSLAD (230 aa)) forms a coiled coil. ARM repeat units lie at residues 683-722 (RSNI…NLAA), 724-764 (DVNQ…NLAM), 766-806 (GSNQ…NLCG), and 808-847 (EKLH…NFAK).

Belongs to the TRAFAC class myosin-kinesin ATPase superfamily. Kinesin family. Ungrouped subfamily.

The protein resides in the cytoplasm. It is found in the cytoskeleton. The sequence is that of Kinesin-like protein KIN-UA from Oryza sativa subsp. japonica (Rice).